The primary structure comprises 317 residues: 17-beta-hydroxysteroid dehydrogenase type 6 (317 aa).

The signal sequence occupies residues 1-17; that stretch reads MWLYLAAFVGLYYLLHW. 33 to 57 contributes to the NAD(+) binding site; that stretch reads FITGCDSGFGNLLARQLDARGLRVL. An N-linked (GlcNAc...) asparagine glycan is attached at Asn-161. Ser-164 serves as a coordination point for substrate. Tyr-176 (proton acceptor) is an active-site residue. Asn-215 and Asn-256 each carry an N-linked (GlcNAc...) asparagine glycan.

This sequence belongs to the short-chain dehydrogenases/reductases (SDR) family. Detected in liver and prostate (at protein level). Detected in adult liver, lung, brain, placenta, prostate, adrenal gland, testis, mammary gland, spleen, spinal cord and uterus. Detected in caudate nucleus, and at lower levels in amygdala, corpus callosum, hippocampus, substantia nigra and thalamus. Detected in fetal lung, liver and brain.

The protein resides in the microsome membrane. It localises to the early endosome membrane. It carries out the reaction all-trans-retinol--[retinol-binding protein] + NAD(+) = all-trans-retinal--[retinol-binding protein] + NADH + H(+). The enzyme catalyses all-trans-retinol + NAD(+) = all-trans-retinal + NADH + H(+). It catalyses the reaction androsterone + NAD(+) = 5alpha-androstan-3,17-dione + NADH + H(+). The catalysed reaction is testosterone + NAD(+) = androst-4-ene-3,17-dione + NADH + H(+). It carries out the reaction 5alpha-androstane-3alpha,17beta-diol + NAD(+) = 17beta-hydroxy-5alpha-androstan-3-one + NADH + H(+). The enzyme catalyses 17beta-estradiol + NAD(+) = estrone + NADH + H(+). It catalyses the reaction 17beta-estradiol + NADP(+) = estrone + NADPH + H(+). The catalysed reaction is 3alpha-hydroxy-5alpha-pregnan-20-one + NAD(+) = 5alpha-pregnane-3,20-dione + NADH + H(+). It carries out the reaction 5alpha-androstane-3beta,17beta-diol + NAD(+) = 17beta-hydroxy-5alpha-androstan-3-one + NADH + H(+). The enzyme catalyses 3beta-hydroxy-5alpha-androstan-17-one + NAD(+) = 5alpha-androstan-3,17-dione + NADH + H(+). Functionally, NAD-dependent oxidoreductase with broad substrate specificity that shows both oxidative and reductive activity (in vitro). Has 17-beta-hydroxysteroid dehydrogenase activity towards various steroids (in vitro). Converts 5-alpha-androstan-3-alpha,17-beta-diol to androsterone and estradiol to estrone (in vitro). Has 3-alpha-hydroxysteroid dehydrogenase activity towards androsterone (in vitro). Has retinol dehydrogenase activity towards all-trans-retinol (in vitro). Can convert androsterone to epi-androsterone. Androsterone is first oxidized to 5-alpha-androstane-3,17-dione and then reduced to epi-andosterone. Can act on both C-19 and C-21 3-alpha-hydroxysteroids. This chain is 17-beta-hydroxysteroid dehydrogenase type 6 (HSD17B6), found in Homo sapiens (Human).